Here is a 467-residue protein sequence, read N- to C-terminus: UDP-N-acetylmuramate--L-alanine ligase (467 aa).

An ATP-binding site is contributed by 114-120 (GTHGKTT).

The protein belongs to the MurCDEF family.

The protein resides in the cytoplasm. The enzyme catalyses UDP-N-acetyl-alpha-D-muramate + L-alanine + ATP = UDP-N-acetyl-alpha-D-muramoyl-L-alanine + ADP + phosphate + H(+). It functions in the pathway cell wall biogenesis; peptidoglycan biosynthesis. Its function is as follows. Cell wall formation. The chain is UDP-N-acetylmuramate--L-alanine ligase from Bradyrhizobium sp. (strain BTAi1 / ATCC BAA-1182).